The following is a 556-amino-acid chain: Formate--tetrahydrofolate ligase 2 (556 aa).

An ATP-binding site is contributed by 65–72 (TPAGEGKS).

The protein belongs to the formate--tetrahydrofolate ligase family.

It catalyses the reaction (6S)-5,6,7,8-tetrahydrofolate + formate + ATP = (6R)-10-formyltetrahydrofolate + ADP + phosphate. It functions in the pathway one-carbon metabolism; tetrahydrofolate interconversion. In Streptococcus sanguinis (strain SK36), this protein is Formate--tetrahydrofolate ligase 2.